The sequence spans 244 residues: Mast cell protease 2 (244 aa).

The N-terminal stretch at 1–18 (MQALLFLMALLLPSGAGA) is a signal peptide. Positions 19–20 (EE) are cleaved as a propeptide — activation peptide. Residues 21 to 242 (IIGGVEAKPH…YLPWIYKVLK (222 aa)) form the Peptidase S1 domain. N-linked (GlcNAc...) asparagine glycosylation occurs at asparagine 44. An intrachain disulfide couples cysteine 50 to cysteine 66. Residues histidine 65 and aspartate 109 each act as charge relay system in the active site. Intrachain disulfides connect cysteine 143/cysteine 208 and cysteine 174/cysteine 187. Serine 202 acts as the Charge relay system in catalysis.

The protein belongs to the peptidase S1 family. Granzyme subfamily. In terms of tissue distribution, mucosal mast cells.

In Mus musculus (Mouse), this protein is Mast cell protease 2 (Mcpt2).